A 469-amino-acid polypeptide reads, in one-letter code: Tryptophan biosynthesis protein TrpCF (469 aa).

Residues 1–271 form an indole-3-glycerol phosphate synthase region; the sequence is MSEQLSEHIS…LAVRKIVLGE (271 aa). The tract at residues 272–469 is N-(5'-phosphoribosyl)anthranilate isomerase; that stretch reads HKVCGLTHPD…QQVFQQLRNY (198 aa).

This sequence in the N-terminal section; belongs to the TrpC family. The protein in the C-terminal section; belongs to the TrpF family. In terms of assembly, monomer.

The catalysed reaction is N-(5-phospho-beta-D-ribosyl)anthranilate = 1-(2-carboxyphenylamino)-1-deoxy-D-ribulose 5-phosphate. The enzyme catalyses 1-(2-carboxyphenylamino)-1-deoxy-D-ribulose 5-phosphate + H(+) = (1S,2R)-1-C-(indol-3-yl)glycerol 3-phosphate + CO2 + H2O. It participates in amino-acid biosynthesis; L-tryptophan biosynthesis; L-tryptophan from chorismate: step 3/5. It functions in the pathway amino-acid biosynthesis; L-tryptophan biosynthesis; L-tryptophan from chorismate: step 4/5. Its function is as follows. Bifunctional enzyme that catalyzes two sequential steps of tryptophan biosynthetic pathway. The first reaction is catalyzed by the isomerase, coded by the TrpF domain; the second reaction is catalyzed by the synthase, coded by the TrpC domain. In Vibrio cholerae serotype O1 (strain ATCC 39315 / El Tor Inaba N16961), this protein is Tryptophan biosynthesis protein TrpCF (trpCF).